The primary structure comprises 270 residues: Interleukin-1 beta (270 aa).

The propeptide occupies 1–118 (MATVPEPTSE…VYDDDAFVCD (118 aa)).

It belongs to the IL-1 family. Monomer. In its precursor form, weakly interacts with full-length MEFV; the mature cytokine does not interact at all. Interacts with integrins ITGAV:ITGBV and ITGA5:ITGB1; integrin-binding is required for IL1B signaling. Interacts with cargo receptor TMED10; the interaction is direct and is required for the secretion of IL1B mature form. Interacts with HSP90AB1; the interaction facilitates cargo translocation into the ERGIC. Interacts with HSP90B1; the interaction facilitates cargo translocation into the ERGIC.

The protein resides in the cytoplasm. It is found in the cytosol. It localises to the secreted. Its subcellular location is the lysosome. The protein localises to the extracellular exosome. In terms of biological role, potent pro-inflammatory cytokine. Initially discovered as the major endogenous pyrogen, induces prostaglandin synthesis, neutrophil influx and activation, T-cell activation and cytokine production, B-cell activation and antibody production, and fibroblast proliferation and collagen production. Promotes Th17 differentiation of T-cells. Synergizes with IL12/interleukin-12 to induce IFNG synthesis from T-helper 1 (Th1) cells. Plays a role in angiogenesis by inducing VEGF production synergistically with TNF and IL6. Involved in transduction of inflammation downstream of pyroptosis: its mature form is specifically released in the extracellular milieu by passing through the gasdermin-D (GSDMD) pore. This is Interleukin-1 beta (IL1B) from Phoca vitulina richardii (Pacific harbor seal).